Consider the following 224-residue polypeptide: Paired immunoglobulin-like type 2 receptor beta (224 aa).

The first 28 residues, 1–28 (MALLISLPGGTPAMAQVLLLLSSGCLHA), serve as a signal peptide directing secretion. Topologically, residues 29 to 195 (GNSERYNRKN…NPSLMNLGAM (167 aa)) are extracellular. Residues asparagine 90, asparagine 107, and asparagine 154 are each glycosylated (N-linked (GlcNAc...) asparagine). A helical membrane pass occupies residues 196 to 216 (VTMLLAKVLVIVLVYGWMIFL). The Cytoplasmic segment spans residues 217–224 (RWKQRPAH).

Interacts with CD99. Probably associates with DAP12. Widely expressed with highest levels in spleen, liver and lung. Predominantly expressed by natural killer cells, macrophages, and granulocytes and dendritic cells (BM-DC).

It localises to the membrane. Paired receptors consist of highly related activating and inhibitory receptors and are widely involved in the regulation of the immune system. PILRB is thought to act as a cellular signaling activating receptor that associates with ITAM-bearing adapter molecules on the cell surface. Seems to associate with DAP12 and is a receptor for CD99. May be involved in target cell recognition by natural killer cells and in activation of dendritic cells. The chain is Paired immunoglobulin-like type 2 receptor beta (Pilrb) from Mus musculus (Mouse).